The sequence spans 213 residues: Probable inactive serine/threonine-protein kinase DDB_G0280559 (213 aa).

The Protein kinase domain occupies 1–211 (MVLRYSYVFK…WNEIVNHSFF (211 aa)).

The protein belongs to the protein kinase superfamily. Ser/Thr protein kinase family.

The protein is Probable inactive serine/threonine-protein kinase DDB_G0280559 of Dictyostelium discoideum (Social amoeba).